A 393-amino-acid polypeptide reads, in one-letter code: Bone morphogenetic protein 2 (393 aa).

An N-terminal signal peptide occupies residues 1-19 (MVAGTRCLLVLLLPQVLLG). Positions 20–279 (GAAGLIPELG…GHPLHKREKR (260 aa)) are cleaved as a propeptide — cleaved by PCSK5. The residue at position 85 (Ser85) is a Phosphoserine. N-linked (GlcNAc...) asparagine glycans are attached at residues Asn133, Asn161, and Asn197. Residues 268-290 (GKGHPLHKREKRQAKHKQRKRLK) are disordered. Positions 271–290 (HPLHKREKRQAKHKQRKRLK) are enriched in basic residues. Cystine bridges form between Cys293-Cys358, Cys322-Cys390, and Cys326-Cys392. The N-linked (GlcNAc...) asparagine glycan is linked to Asn335.

The protein belongs to the TGF-beta family. Homodimer; disulfide-linked. Interacts with SOSTDC1. Interacts with GREM2, RGMA, RGMB and RGMC. Interacts with ASPN. Interacts with MAFP5. Interacts with FBN1 (via N-terminal domain) and FBN2. Interacts with type I receptor BMPR1A. Interacts with type II receptor BMPR2. Interacts with SCUBE3. Interacts with TNFAIP6 (primarily via Link domain); this interaction is inhibited by hyaluronan. Interacts with ERFE. Interacts with BMPR1A/ALK3; the interaction may induce HAMP expression. Forms heterodimers with BMP6 in vitro; the heterodimer then binds to its receptor BMPR1A /ALK3 and may induce HAMP expression. Interacts with TGFBR3. As to expression, expressed in femur, calvaria, trachea, lung and ovary.

It is found in the secreted. Growth factor of the TGF-beta superfamily that plays essential roles in many developmental processes, including cardiogenesis, neurogenesis, and osteogenesis. Induces cartilage and bone formation. Initiates the canonical BMP signaling cascade by associating with type I receptor BMPR1A and type II receptor BMPR2. Once all three components are bound together in a complex at the cell surface, BMPR2 phosphorylates and activates BMPR1A. In turn, BMPR1A propagates signal by phosphorylating SMAD1/5/8 that travel to the nucleus and act as activators and repressors of transcription of target genes. Also acts to promote expression of HAMP, via the interaction with its receptor BMPR1A/ALK3. Can also signal through non-canonical pathways such as ERK/MAP kinase signaling cascade that regulates osteoblast differentiation. Also stimulates the differentiation of myoblasts into osteoblasts via the EIF2AK3-EIF2A-ATF4 pathway by stimulating EIF2A phosphorylation which leads to increased expression of ATF4 which plays a central role in osteoblast differentiation. Acts as a positive regulator of odontoblast differentiation during mesenchymal tooth germ formation, expression is repressed during the bell stage by MSX1-mediated inhibition of CTNNB1 signaling. This chain is Bone morphogenetic protein 2 (Bmp2), found in Rattus norvegicus (Rat).